We begin with the raw amino-acid sequence, 635 residues long: Arabinoxylan arabinofuranohydrolase (635 aa).

The signal sequence occupies residues 1-26 (MIRKCLVLFLSFALLLSVFPMLNVDA). Residue Asp49 is the Proton acceptor of the active site. Catalysis depends on Glu248, which acts as the Proton donor. Asn311 is a binding site for substrate. 2 consecutive CBM6 domains span residues 379–508 (TRVE…WQFT) and 517–634 (TKVE…IEFS). Residues Glu382, Glu384, Asn406, Leu407, Asp503, Glu520, Glu522, Asp539, Tyr544, Asp620, Trp624, Asp625, and Asp629 each contribute to the Ca(2+) site.

The protein belongs to the glycosyl hydrolase 43 family.

The protein localises to the secreted. The enzyme catalyses Hydrolysis of terminal non-reducing alpha-L-arabinofuranoside residues in alpha-L-arabinosides.. It participates in glycan degradation; xylan degradation. Its activity is regulated as follows. Activated by calcium and magnesium. Inhibited by copper. Functionally, cleaves arabinose units from O-2- or O-3-monosubstituted xylose residues, thereby assisting in arabinoxylan (AX) and short-chain arabinoxylo-oligosaccharide (AXOS) degradation. Preferres wheat flour xylan over oat spelt xylan as substrate. Does not display endoxylanase activity. In Paenibacillus polymyxa (Bacillus polymyxa), this protein is Arabinoxylan arabinofuranohydrolase (xynD).